Reading from the N-terminus, the 263-residue chain is 4-hydroxy-tetrahydrodipicolinate reductase (263 aa).

Residues 8-13 (GACGKM), aspartate 34, 97-99 (GTT), and 123-126 (APNF) contribute to the NAD(+) site. Histidine 153 acts as the Proton donor/acceptor in catalysis. Position 154 (histidine 154) interacts with (S)-2,3,4,5-tetrahydrodipicolinate. The active-site Proton donor is lysine 157. (S)-2,3,4,5-tetrahydrodipicolinate is bound at residue 163–164 (GT).

This sequence belongs to the DapB family.

It is found in the cytoplasm. It catalyses the reaction (S)-2,3,4,5-tetrahydrodipicolinate + NAD(+) + H2O = (2S,4S)-4-hydroxy-2,3,4,5-tetrahydrodipicolinate + NADH + H(+). The catalysed reaction is (S)-2,3,4,5-tetrahydrodipicolinate + NADP(+) + H2O = (2S,4S)-4-hydroxy-2,3,4,5-tetrahydrodipicolinate + NADPH + H(+). Its pathway is amino-acid biosynthesis; L-lysine biosynthesis via DAP pathway; (S)-tetrahydrodipicolinate from L-aspartate: step 4/4. Catalyzes the conversion of 4-hydroxy-tetrahydrodipicolinate (HTPA) to tetrahydrodipicolinate. This is 4-hydroxy-tetrahydrodipicolinate reductase from Carboxydothermus hydrogenoformans (strain ATCC BAA-161 / DSM 6008 / Z-2901).